Reading from the N-terminus, the 200-residue chain is High frequency lysogenization protein HflD homolog (200 aa).

It belongs to the HflD family.

Its subcellular location is the cytoplasm. It localises to the cell inner membrane. This Pseudoalteromonas translucida (strain TAC 125) protein is High frequency lysogenization protein HflD homolog.